We begin with the raw amino-acid sequence, 503 residues long: Aromatase 2 (503 aa).

Position 437 (C437) interacts with heme.

The protein belongs to the cytochrome P450 family. It depends on heme as a cofactor.

The protein resides in the membrane. The enzyme catalyses testosterone + 3 reduced [NADPH--hemoprotein reductase] + 3 O2 = 17beta-estradiol + formate + 3 oxidized [NADPH--hemoprotein reductase] + 4 H2O + 4 H(+). It carries out the reaction androst-4-ene-3,17-dione + 3 reduced [NADPH--hemoprotein reductase] + 3 O2 = estrone + formate + 3 oxidized [NADPH--hemoprotein reductase] + 4 H2O + 4 H(+). Its function is as follows. Catalyzes the formation of aromatic C18 estrogens from C19 androgens. The polypeptide is Aromatase 2 (CYP19A2) (Sus scrofa (Pig)).